The following is a 98-amino-acid chain: Large ribosomal subunit protein uL23 (98 aa).

Belongs to the universal ribosomal protein uL23 family. As to quaternary structure, part of the 50S ribosomal subunit. Contacts protein L29, and trigger factor when it is bound to the ribosome.

One of the early assembly proteins it binds 23S rRNA. One of the proteins that surrounds the polypeptide exit tunnel on the outside of the ribosome. Forms the main docking site for trigger factor binding to the ribosome. This is Large ribosomal subunit protein uL23 from Clostridium kluyveri (strain NBRC 12016).